Reading from the N-terminus, the 426-residue chain is Endothelin-1 receptor (426 aa).

An N-terminal signal peptide occupies residues Met1–Gly20. Residues Asp21–Lys79 are Extracellular-facing. 2 N-linked (GlcNAc...) asparagine glycosylation sites follow: Asn29 and Asn61. The chain crosses the membrane as a helical span at residues Tyr80 to Leu101. Topologically, residues Arg102–Arg111 are cytoplasmic. The chain crosses the membrane as a helical span at residues Asn112 to Ile131. The Extracellular segment spans residues Asp132 to Lys158. A disulfide bridge connects residues Cys157 and Cys238. The chain crosses the membrane as a helical span at residues Leu159 to Val180. The Cytoplasmic segment spans residues Asp181 to Glu204. Residues Ile205–Phe228 form a helical membrane-spanning segment. Over Glu229–Asp255 the chain is Extracellular. Residue Asn241 is glycosylated (N-linked (GlcNAc...) asparagine). Residues Trp256–Met277 traverse the membrane as a helical segment. At Thr278–Lys305 the chain is on the cytoplasmic side. Residues Thr306 to Leu327 form a helical membrane-spanning segment. Topologically, residues Lys328–Leu346 are extracellular. A helical membrane pass occupies residues Arg347–Val371. Residues Ser372 to Asn426 lie on the Cytoplasmic side of the membrane. Residue Ser424 is modified to Phosphoserine.

It belongs to the G-protein coupled receptor 1 family. Endothelin receptor subfamily. EDNRA sub-subfamily. As to quaternary structure, interacts with HDAC7 and KAT5.

The protein localises to the cell membrane. In terms of biological role, receptor for endothelin-1. Mediates its action by association with G proteins that activate a phosphatidylinositol-calcium second messenger system. The rank order of binding affinities for ET-A is: ET1 &gt; ET2 &gt;&gt; ET3. The polypeptide is Endothelin-1 receptor (Canis lupus familiaris (Dog)).